Here is a 90-residue protein sequence, read N- to C-terminus: Barrier-to-autointegration factor-like protein (90 aa).

As to quaternary structure, homodimer. Heterodimerizes with BANF1.

Its subcellular location is the nucleus. It localises to the cytoplasm. Functionally, may play a role in BANF1 regulation and influence tissue-specific roles of BANF1. The protein is Barrier-to-autointegration factor-like protein (Banf2) of Mus musculus (Mouse).